The chain runs to 547 residues: MAKLIKHGSEGREQVLKGVDILADAVKVTLGPKGRNVLIEQSFGSPKITKDGVTVAKSIELKDKIRNAGAQLLKSAATKAAEVAGDGTTTATVLARALAREGNKLVAAGYNPMDLKRGMDLAVNAVVEEIKKSSKKINSQEEIAQVGTISSNGDKEIGEKIAKAMEEVGKEGVITVEEAKNFSFDVEVVKGMMFDRGYLSPYFVTNSEKMVAELENPFILLFEKKLSNLQPMLPILEAVVQSQRPLLIIAEDVEGEALATLVVNRLRGGLKVAAVKAPGFGDRRKAMMEDIAILTKGELITEDLGMKLENVSIKSLGTAKRVTISKENTVIVDGNGDKKNIEDRVLQIKSQIAETTSDYDKEKLQERLAKLSGGVAVLKVGGATEVEVKERKDRVEDALAATRAAVEEGVVAGGGVTLLHASQTLRNLKVDNKDQQAGIEIVIEALKDPLKQIVENAGENGGVVVGKLLEHKDKNYGFNAQDMQYVDMIKAGIIDPAKVVRTALQDAASVASLIITTETLIVDEPSDKEDSIPPMRGGMGGMGGMDF.

ATP is bound by residues 29 to 32, K50, 86 to 90, G414, and D495; these read TLGP and DGTTT. Residues 525–547 are disordered; that stretch reads PSDKEDSIPPMRGGMGGMGGMDF. The segment covering 537 to 547 has biased composition (gly residues); that stretch reads GGMGGMGGMDF.

It belongs to the chaperonin (HSP60) family. Forms a cylinder of 14 subunits composed of two heptameric rings stacked back-to-back. Interacts with the co-chaperonin GroES.

It is found in the cytoplasm. The enzyme catalyses ATP + H2O + a folded polypeptide = ADP + phosphate + an unfolded polypeptide.. Its function is as follows. Together with its co-chaperonin GroES, plays an essential role in assisting protein folding. The GroEL-GroES system forms a nano-cage that allows encapsulation of the non-native substrate proteins and provides a physical environment optimized to promote and accelerate protein folding. The protein is Chaperonin GroEL of Rickettsia felis (strain ATCC VR-1525 / URRWXCal2) (Rickettsia azadi).